A 164-amino-acid polypeptide reads, in one-letter code: Large ribosomal subunit protein uL10 (164 aa).

The protein belongs to the universal ribosomal protein uL10 family. As to quaternary structure, part of the ribosomal stalk of the 50S ribosomal subunit. The N-terminus interacts with L11 and the large rRNA to form the base of the stalk. The C-terminus forms an elongated spine to which L12 dimers bind in a sequential fashion forming a multimeric L10(L12)X complex.

Its function is as follows. Forms part of the ribosomal stalk, playing a central role in the interaction of the ribosome with GTP-bound translation factors. This Helicobacter pylori (strain G27) protein is Large ribosomal subunit protein uL10.